The sequence spans 293 residues: Acetylglutamate kinase (293 aa).

Residues 66 to 67 (GG), arginine 88, and asparagine 190 each bind substrate.

The protein belongs to the acetylglutamate kinase family. ArgB subfamily.

It is found in the cytoplasm. The enzyme catalyses N-acetyl-L-glutamate + ATP = N-acetyl-L-glutamyl 5-phosphate + ADP. It functions in the pathway amino-acid biosynthesis; L-arginine biosynthesis; N(2)-acetyl-L-ornithine from L-glutamate: step 2/4. Its function is as follows. Catalyzes the ATP-dependent phosphorylation of N-acetyl-L-glutamate. The chain is Acetylglutamate kinase from Thiobacillus denitrificans (strain ATCC 25259 / T1).